The sequence spans 126 residues: Aspartate 1-decarboxylase (126 aa).

Serine 25 serves as the catalytic Schiff-base intermediate with substrate; via pyruvic acid. A Pyruvic acid (Ser) modification is found at serine 25. Position 57 (threonine 57) interacts with substrate. Tyrosine 58 (proton donor) is an active-site residue. Residue 73–75 (GAA) coordinates substrate.

It belongs to the PanD family. In terms of assembly, heterooctamer of four alpha and four beta subunits. Requires pyruvate as cofactor. Post-translationally, is synthesized initially as an inactive proenzyme, which is activated by self-cleavage at a specific serine bond to produce a beta-subunit with a hydroxyl group at its C-terminus and an alpha-subunit with a pyruvoyl group at its N-terminus.

It is found in the cytoplasm. It carries out the reaction L-aspartate + H(+) = beta-alanine + CO2. It participates in cofactor biosynthesis; (R)-pantothenate biosynthesis; beta-alanine from L-aspartate: step 1/1. Catalyzes the pyruvoyl-dependent decarboxylation of aspartate to produce beta-alanine. The chain is Aspartate 1-decarboxylase from Halorhodospira halophila (strain DSM 244 / SL1) (Ectothiorhodospira halophila (strain DSM 244 / SL1)).